A 604-amino-acid chain; its full sequence is Acetylcholinesterase 4 (604 aa).

An N-terminal signal peptide occupies residues 1–23; sequence MKPKLVFLPFLIFITVFIEESEA. Cys88 and Cys115 are disulfide-bonded. N-linked (GlcNAc...) asparagine glycosylation is found at Asn96 and Asn128. Catalysis depends on Ser219, which acts as the Acyl-ester intermediate. An intrachain disulfide couples Cys273 to Cys284. N-linked (GlcNAc...) asparagine glycans are attached at residues Asn274 and Asn299. Residue Glu347 is the Charge relay system of the active site. 2 N-linked (GlcNAc...) asparagine glycosylation sites follow: Asn400 and Asn446. Cys426 and Cys561 form a disulfide bridge. Residue His477 is the Charge relay system of the active site.

Belongs to the type-B carboxylesterase/lipase family.

It is found in the synapse. It localises to the secreted. The protein localises to the cell membrane. It catalyses the reaction acetylcholine + H2O = choline + acetate + H(+). In terms of biological role, rapidly hydrolyzes choline released into the synapse. The polypeptide is Acetylcholinesterase 4 (ace-4) (Caenorhabditis briggsae).